Consider the following 325-residue polypeptide: Melanocortin receptor 5 (325 aa).

Residues 1–37 (MNSSFHLHFLDLNLNATEGNLSGPNVKNKSSPCEDMG) lie on the Extracellular side of the membrane. 4 N-linked (GlcNAc...) asparagine glycosylation sites follow: N2, N15, N20, and N28. The chain crosses the membrane as a helical span at residues 38–61 (IAVEVFLTLGVISLLENILVIGAI). The Cytoplasmic portion of the chain corresponds to 62-73 (VKNKNLHSPMYF). The chain crosses the membrane as a helical span at residues 74 to 97 (FVCSLAVADMLVSMSSAWETITIY). Over 98-114 (LLNNKHLVIADAFVRHI) the chain is Extracellular. Residues 115–138 (DNVFDSMICISVVASMCSLLAIAV) traverse the membrane as a helical segment. Residues 139 to 155 (DRYVTIFYALRYHHIMT) lie on the Cytoplasmic side of the membrane. The chain crosses the membrane as a helical span at residues 156–179 (ARRSGAIIAGIWAFCTGCGIVFIL). The Extracellular segment spans residues 180–186 (YSESTYV). A helical transmembrane segment spans residues 187–211 (ILCLISMFFAMLFLLVSLYIHMFLL). Over 212–239 (ARTHVKRIAALPRASSARQRTSMQGAVT) the chain is Cytoplasmic. A helical transmembrane segment spans residues 240–265 (VTMLLGVFTVCWAPFFLHLTLMLSCP). Topologically, residues 266–273 (QNLYCSCF) are extracellular. The helical transmembrane segment at 274–297 (MSHFNMYLILIMCNSVMDPLIYAF) threads the bilayer. The Cytoplasmic portion of the chain corresponds to 298–325 (RSQEMRKTFKEIICCRGFRIACSFPRRD). 2 S-palmitoyl cysteine lipidation sites follow: C311 and C312.

Belongs to the G-protein coupled receptor 1 family.

It localises to the cell membrane. In terms of biological role, receptor for MSH (alpha, beta and gamma) and ACTH. The activity of this receptor is mediated by G proteins which activate adenylate cyclase. This receptor is a possible mediator of the immunomodulation properties of melanocortins. In Pan troglodytes (Chimpanzee), this protein is Melanocortin receptor 5 (MC5R).